Here is a 64-residue protein sequence, read N- to C-terminus: Large ribosomal subunit protein bL32 (64 aa).

The disordered stretch occupies residues 1 to 20; that stretch reads MALPKYKTSRANTHSRRANW.

The protein belongs to the bacterial ribosomal protein bL32 family.

This chain is Large ribosomal subunit protein bL32, found in Bifidobacterium adolescentis (strain ATCC 15703 / DSM 20083 / NCTC 11814 / E194a).